Reading from the N-terminus, the 525-residue chain is Glutamate--cysteine ligase (525 aa).

The protein belongs to the glutamate--cysteine ligase type 1 family. Type 1 subfamily.

It carries out the reaction L-cysteine + L-glutamate + ATP = gamma-L-glutamyl-L-cysteine + ADP + phosphate + H(+). It participates in sulfur metabolism; glutathione biosynthesis; glutathione from L-cysteine and L-glutamate: step 1/2. The sequence is that of Glutamate--cysteine ligase from Pseudoalteromonas translucida (strain TAC 125).